Reading from the N-terminus, the 262-residue chain is Flap endonuclease Xni (262 aa).

Residue D109 participates in Mg(2+) binding. The 5'-3' exonuclease domain maps to L165–K255. 4 residues coordinate K(+): L176, A177, I187, and V190. Residues G189 to A194 form an interaction with DNA region.

The protein belongs to the Xni family. It depends on Mg(2+) as a cofactor. K(+) serves as cofactor.

Functionally, has flap endonuclease activity. During DNA replication, flap endonucleases cleave the 5'-overhanging flap structure that is generated by displacement synthesis when DNA polymerase encounters the 5'-end of a downstream Okazaki fragment. The chain is Flap endonuclease Xni from Aliivibrio fischeri (strain MJ11) (Vibrio fischeri).